We begin with the raw amino-acid sequence, 336 residues long: MFGKTDKMDVRCHSDTEAARVSKNAHKESREIKGAEGSLPAAFLKEPQGAFSASGASEDCNKSKSNSSADPDYCRRILVRDAKGSIREIILPKGLDLDRPKRTRTSFTAEQLYRLEMEFQRCQYVVGRERTELARQLNLSETQVKVWFQNRRTKQKKDQGKDSELRSVVSETAATCSVLRLLEQGRLLSPPGLPALLPPCATGALGSALRGPSLPALGAGAAAGSAAAAAAAATAPGPAGAASQHPPAVGGAPGPGPAGPGGLHAGAPTASHGLFSLPVPSLLGSVASRLSSAPLTMAGSLAGNLQELSARYLSSSAFEPYSRTNNKEGAEKKALD.

The span at 1–34 (MFGKTDKMDVRCHSDTEAARVSKNAHKESREIKG) shows a compositional bias: basic and acidic residues. 2 disordered regions span residues 1–39 (MFGKTDKMDVRCHSDTEAARVSKNAHKESREIKGAEGSL) and 50–69 (AFSASGASEDCNKSKSNSSA). Positions 100–159 (PKRTRTSFTAEQLYRLEMEFQRCQYVVGRERTELARQLNLSETQVKVWFQNRRTKQKKDQ) form a DNA-binding region, homeobox. Positions 236-250 (PGPAGAASQHPPAVG) are enriched in low complexity. Disordered regions lie at residues 236–267 (PGPAGAASQHPPAVGGAPGPGPAGPGGLHAGA) and 316–336 (SAFEPYSRTNNKEGAEKKALD). A compositionally biased stretch (basic and acidic residues) spans 325–336 (NNKEGAEKKALD).

The protein belongs to the EMX homeobox family.

It is found in the nucleus. Transcription factor that may function in dorsoventral specification of the forebrain. Required for axon guidance and major tract formation in the developing forebrain. May contribute to the differentiation of the neuroretina, pigmented epithelium and optic stalk. This Rattus norvegicus (Rat) protein is Ventral anterior homeobox 1 (Vax1).